A 363-amino-acid chain; its full sequence is Phosphoserine aminotransferase (363 aa).

Residue Arg41 coordinates L-glutamate. Pyridoxal 5'-phosphate-binding positions include 75-76 (AS), Trp100, Thr155, Asp175, and Gln198. Position 199 is an N6-(pyridoxal phosphate)lysine (Lys199). 239–240 (NT) contributes to the pyridoxal 5'-phosphate binding site.

It belongs to the class-V pyridoxal-phosphate-dependent aminotransferase family. SerC subfamily. As to quaternary structure, homodimer. It depends on pyridoxal 5'-phosphate as a cofactor.

The protein localises to the cytoplasm. It catalyses the reaction O-phospho-L-serine + 2-oxoglutarate = 3-phosphooxypyruvate + L-glutamate. The catalysed reaction is 4-(phosphooxy)-L-threonine + 2-oxoglutarate = (R)-3-hydroxy-2-oxo-4-phosphooxybutanoate + L-glutamate. The protein operates within amino-acid biosynthesis; L-serine biosynthesis; L-serine from 3-phospho-D-glycerate: step 2/3. Functionally, catalyzes the reversible conversion of 3-phosphohydroxypyruvate to phosphoserine and of 3-hydroxy-2-oxo-4-phosphonooxybutanoate to phosphohydroxythreonine. The protein is Phosphoserine aminotransferase of Streptococcus agalactiae serotype III (strain NEM316).